Reading from the N-terminus, the 105-residue chain is Iron-sulfur cluster assembly protein CyaY (105 aa).

Belongs to the frataxin family.

Functionally, involved in iron-sulfur (Fe-S) cluster assembly. May act as a regulator of Fe-S biogenesis. This Dechloromonas aromatica (strain RCB) protein is Iron-sulfur cluster assembly protein CyaY.